The primary structure comprises 98 residues: Prostate and testis expressed protein 3 (98 aa).

A signal peptide spans 1–20; that stretch reads MNKHFLFLFLLYCLIVAVTS. Residues 21 to 97 enclose the UPAR/Ly6 domain; sequence LQCITCHLRT…CCNYNYCNFK (77 aa). Cystine bridges form between Cys23-Cys50, Cys26-Cys35, Cys42-Cys68, and Cys72-Cys88.

The protein belongs to the PATE family. In terms of tissue distribution, specifically expressed in prostate and testis.

It localises to the secreted. The protein is Prostate and testis expressed protein 3 (PATE3) of Homo sapiens (Human).